Here is a 417-residue protein sequence, read N- to C-terminus: Gamma-glutamyl phosphate reductase (417 aa).

This sequence belongs to the gamma-glutamyl phosphate reductase family.

The protein resides in the cytoplasm. The catalysed reaction is L-glutamate 5-semialdehyde + phosphate + NADP(+) = L-glutamyl 5-phosphate + NADPH + H(+). The protein operates within amino-acid biosynthesis; L-proline biosynthesis; L-glutamate 5-semialdehyde from L-glutamate: step 2/2. Its function is as follows. Catalyzes the NADPH-dependent reduction of L-glutamate 5-phosphate into L-glutamate 5-semialdehyde and phosphate. The product spontaneously undergoes cyclization to form 1-pyrroline-5-carboxylate. The chain is Gamma-glutamyl phosphate reductase from Proteus mirabilis (strain HI4320).